Consider the following 567-residue polypeptide: Oxygen-dependent choline dehydrogenase (567 aa).

4–33 (DYIIIGAGSAGNVLAARLTEDADVTVLLLE) is an FAD binding site. Residue His-473 is the Proton acceptor of the active site.

The protein belongs to the GMC oxidoreductase family. FAD is required as a cofactor.

It carries out the reaction choline + A = betaine aldehyde + AH2. The catalysed reaction is betaine aldehyde + NAD(+) + H2O = glycine betaine + NADH + 2 H(+). Its pathway is amine and polyamine biosynthesis; betaine biosynthesis via choline pathway; betaine aldehyde from choline (cytochrome c reductase route): step 1/1. Its function is as follows. Involved in the biosynthesis of the osmoprotectant glycine betaine. Catalyzes the oxidation of choline to betaine aldehyde and betaine aldehyde to glycine betaine at the same rate. The sequence is that of Oxygen-dependent choline dehydrogenase from Yersinia pseudotuberculosis serotype IB (strain PB1/+).